We begin with the raw amino-acid sequence, 921 residues long: 2-oxoadipate dehydrogenase complex component E1 (921 aa).

2 positions are modified to N6-succinyllysine: Lys-184 and Lys-189. Residues Gly-300–Ser-319 are disordered. N6-succinyllysine occurs at positions 801 and 819.

The protein belongs to the alpha-ketoglutarate dehydrogenase family. The 2-oxoadipate dehydrogenase complex is composed of OADH (2-oxoadipate dehydrogenase; E1a), DLST (dihydrolipoamide succinyltransferase; E2) and DLD (dihydrolipoamide dehydrogenase; E3). E1a functional unit is a dimer. Requires thiamine diphosphate as cofactor.

The protein resides in the mitochondrion. It catalyses the reaction N(6)-[(R)-lipoyl]-L-lysyl-[protein] + 2-oxoadipate + H(+) = N(6)-[(R)-S(8)-glutaryldihydrolipoyl]-L-lysyl-[protein] + CO2. It participates in amino-acid degradation. Its function is as follows. 2-oxoadipate dehydrogenase (E1a) component of the 2-oxoadipate dehydrogenase complex (OADHC). Participates in the first step, rate limiting for the overall conversion of 2-oxoadipate (alpha-ketoadipate) to glutaryl-CoA and CO(2) catalyzed by the whole OADHC. Catalyzes the irreversible decarboxylation of 2-oxoadipate via the thiamine diphosphate (ThDP) cofactor and subsequent transfer of the decarboxylated acyl intermediate on an oxidized dihydrolipoyl group that is covalently amidated to the E2 enzyme (dihydrolipoyllysine-residue succinyltransferase or DLST). Can catalyze the decarboxylation of 2-oxoglutarate in vitro, but at a much lower rate than 2-oxoadipate. Responsible for the last step of L-lysine, L-hydroxylysine and L-tryptophan catabolism with the common product being 2-oxoadipate. The polypeptide is 2-oxoadipate dehydrogenase complex component E1 (Dhtkd1) (Mus musculus (Mouse)).